Reading from the N-terminus, the 344-residue chain is Phenylalanine--tRNA ligase alpha subunit (344 aa).

Mg(2+) is bound at residue Glu256.

Belongs to the class-II aminoacyl-tRNA synthetase family. Phe-tRNA synthetase alpha subunit type 1 subfamily. In terms of assembly, tetramer of two alpha and two beta subunits. Mg(2+) is required as a cofactor.

The protein resides in the cytoplasm. The enzyme catalyses tRNA(Phe) + L-phenylalanine + ATP = L-phenylalanyl-tRNA(Phe) + AMP + diphosphate + H(+). The chain is Phenylalanine--tRNA ligase alpha subunit from Anoxybacillus flavithermus (strain DSM 21510 / WK1).